The primary structure comprises 122 residues: ATP-dependent Clp protease adapter protein ClpS (122 aa).

The interval 1–27 (MVRMATKPPSMTPTPPTGAPPRDDGGS) is disordered. Pro residues predominate over residues 10–19 (SMTPTPPTGA).

Belongs to the ClpS family. Binds to the N-terminal domain of the chaperone ClpA.

In terms of biological role, involved in the modulation of the specificity of the ClpAP-mediated ATP-dependent protein degradation. The chain is ATP-dependent Clp protease adapter protein ClpS from Paracidovorax citrulli (strain AAC00-1) (Acidovorax citrulli).